A 292-amino-acid polypeptide reads, in one-letter code: Homoserine kinase (292 aa).

81–91 contacts ATP; it reads RPRSGLGSSGA.

The protein belongs to the GHMP kinase family. Homoserine kinase subfamily.

Its subcellular location is the cytoplasm. It catalyses the reaction L-homoserine + ATP = O-phospho-L-homoserine + ADP + H(+). The protein operates within amino-acid biosynthesis; L-threonine biosynthesis; L-threonine from L-aspartate: step 4/5. Catalyzes the ATP-dependent phosphorylation of L-homoserine to L-homoserine phosphate. This is Homoserine kinase from Thermococcus gammatolerans (strain DSM 15229 / JCM 11827 / EJ3).